A 238-amino-acid polypeptide reads, in one-letter code: MTKKVSRRLRELQAKVEDREYGPLDALGLLKETATAKFGEAAEAHIRLGIDPKYTDQQLRTTVALPKGTGQIVRVAVIARGEKVTEASNAGADVVGSEELIDEIQKGRMDFDKLIATPDVMPQVAKLGKMLGPRGLMPSPKGGTVTFDVASAIAEFKAGKLEFRADRTGIVHVMFGKASFSPEDLLVNLKALQETIDRNRPSGAKGRYWRTFYVSATMGPSIRVDINALRDYKLTEAA.

The protein belongs to the universal ribosomal protein uL1 family. As to quaternary structure, part of the 50S ribosomal subunit.

In terms of biological role, binds directly to 23S rRNA. The L1 stalk is quite mobile in the ribosome, and is involved in E site tRNA release. Its function is as follows. Protein L1 is also a translational repressor protein, it controls the translation of the L11 operon by binding to its mRNA. The polypeptide is Large ribosomal subunit protein uL1 (Nostoc sp. (strain PCC 7120 / SAG 25.82 / UTEX 2576)).